The chain runs to 147 residues: Hemoglobin subunit gamma-1 (147 aa).

The 145-residue stretch at 3 to 147 folds into the Globin domain; sequence NFTAEDKAAI…VASALGSRYH (145 aa). Thr-13 is modified (phosphothreonine). Phosphoserine occurs at positions 45, 51, and 53. Lys-60 bears the N6-acetyllysine mark. His-64 contributes to the heme b binding site. Lys-83 is subject to N6-acetyllysine. His-93 is a heme b binding site. Cys-94 carries the post-translational modification S-nitrosocysteine. At Ser-140 the chain carries Phosphoserine.

This sequence belongs to the globin family. Heterotetramer of two alpha chains and two gamma chains in fetal hemoglobin (Hb F). As to expression, red blood cells.

In terms of biological role, gamma chains make up the fetal hemoglobin F, in combination with alpha chains. The protein is Hemoglobin subunit gamma-1 (HBG1) of Plecturocebus moloch (Dusky titi monkey).